The following is a 163-amino-acid chain: Ubiquitin-like protein 1-ribosomal protein eS31 fusion protein (163 aa).

In terms of domain architecture, Ubiquitin-like spans 1–70 (MVFVKTLNRT…IYVNLELLGG (70 aa)). A Glycyl lysine isopeptide (Gly-Lys) (interchain with K-? in acceptor proteins) cross-link involves residue G70. The segment at 115-138 (CQQPSCGGGVFMAQHANRHYCGRC) adopts a C4-type zinc-finger fold.

This sequence in the N-terminal section; belongs to the ubiquitin family. The protein in the C-terminal section; belongs to the eukaryotic ribosomal protein eS31 family.

The protein is Ubiquitin-like protein 1-ribosomal protein eS31 fusion protein (ubl-1) of Caenorhabditis briggsae.